A 142-amino-acid chain; its full sequence is Large ribosomal subunit protein uL13 (142 aa).

This sequence belongs to the universal ribosomal protein uL13 family. As to quaternary structure, part of the 50S ribosomal subunit.

Its function is as follows. This protein is one of the early assembly proteins of the 50S ribosomal subunit, although it is not seen to bind rRNA by itself. It is important during the early stages of 50S assembly. The sequence is that of Large ribosomal subunit protein uL13 from Burkholderia pseudomallei (strain 1106a).